The primary structure comprises 78 residues: Large ribosomal subunit protein bL28 (78 aa).

Positions 1 to 21 (MARVCQVTGKGPMTGNNVSHA) are disordered.

This sequence belongs to the bacterial ribosomal protein bL28 family.

The protein is Large ribosomal subunit protein bL28 of Bordetella petrii (strain ATCC BAA-461 / DSM 12804 / CCUG 43448).